Here is a 305-residue protein sequence, read N- to C-terminus: MSKIPVIVIVGPTAVGKTSLSIELAKKLDGEIISGDSMQVYRGLDIGTAKITPEEMDGIKHYLIDVTNPSEPFTAAKFQIETRKCIETIHQAGRLPIIVGGTGLYIQSVFYDYDFGNVSEDKAYRAELEQLDKTVLWQMLEQKDPESAAQIHENNKRRVIRALEVMHLTGKPFSEYQVNNVLNDRYQPLFLGLDLDRALLYERINQRVNLMFEEGLVTEAKKLYEQHLVDVPAVRGIGYKELFPYFEGKSSLEEAKELIQKNSRHFAKRQLTWFRNRMDIDWIQAGVSSTESEALNKATTFLTAK.

11–18 (GPTAVGKT) is an ATP binding site. 13 to 18 (TAVGKT) contacts substrate. An interaction with substrate tRNA region spans residues 36-39 (DSMQ).

This sequence belongs to the IPP transferase family. In terms of assembly, monomer. The cofactor is Mg(2+).

The catalysed reaction is adenosine(37) in tRNA + dimethylallyl diphosphate = N(6)-dimethylallyladenosine(37) in tRNA + diphosphate. In terms of biological role, catalyzes the transfer of a dimethylallyl group onto the adenine at position 37 in tRNAs that read codons beginning with uridine, leading to the formation of N6-(dimethylallyl)adenosine (i(6)A). In Listeria monocytogenes serotype 4b (strain CLIP80459), this protein is tRNA dimethylallyltransferase.